Reading from the N-terminus, the 177-residue chain is Putative membrane protein 165 (177 aa).

Over 1–7 (MYLVLLI) the chain is Intravirion. A helical membrane pass occupies residues 8-24 (AVILFIIVILMIFLISG). At 25–166 (LFYPEQEPAL…DPHPALKSKN (142 aa)) the chain is on the virion surface side.

This sequence belongs to the asfivirus envelope protein p22 family.

Its subcellular location is the virion membrane. The protein resides in the host cell membrane. The chain is Putative membrane protein 165 from African swine fever virus (isolate Pig/Kenya/KEN-50/1950) (ASFV).